The chain runs to 488 residues: MEVSLTTSIALATIVFFLYKLLTRPTSSKNRLPEPWRLPIIGHMHHLIGTMPHRGVMDLARKYGSLMHLQLGEVSAIVVSSPKWAKEILTTYDIPFANRPETLTGEIIAYHNTDIVLAPYGEYWRQLRKLCTLELLSVKKVKSFQSLREEECWNLVQEIKASGSGTPFNLSEGIFKVIATVLSRAAFGKGIKDQKQFTEIVKEILRETGGFDVADIFPSKKFLHHLSGKRGRLTSIHNKLDSLINNLVAEHTVSKSSKVNETLLDVLLRLKNSEEFPLTADNVKAIILDMFGAGTDTSSATVEWAISELIRCPRAMEKVQAELRQALNGKERIKEEEIQDLPYLNLVIRETLRLHPPLPLVMPRECRQAMNLAGYDVANKTKLIVNVFAINRDPEYWKDAESFNPERFENSNTTIMGADYEYLPFGAGRRMCPGSALGLANVQLPLANILYYFKWKLPNGASHDQLDMTESFGATVQRKTELMLVPSF.

Topologically, residues 1-6 are cytoplasmic; sequence MEVSLT. A helical; Signal-anchor for type II membrane protein transmembrane segment spans residues 7 to 23; the sequence is TSIALATIVFFLYKLLT. Residues 24 to 488 are Lumenal-facing; it reads RPTSSKNRLP…KTELMLVPSF (465 aa). Residues Asn169, Asn260, Asn379, and Asn412 are each glycosylated (N-linked (GlcNAc...) asparagine). Cys432 contributes to the heme binding site.

The protein belongs to the cytochrome P450 family. The cofactor is heme. As to expression, expressed in leaf primordia.

The protein resides in the endoplasmic reticulum membrane. It carries out the reaction (+)-(R)-germacrene A + 3 reduced [NADPH--hemoprotein reductase] + 3 O2 = germacra-1(10),4,11(13)-trien-12-oate + 3 oxidized [NADPH--hemoprotein reductase] + 4 H2O + 4 H(+). Its pathway is secondary metabolite biosynthesis; terpenoid biosynthesis. Its function is as follows. Involved in the biosynthesis of germacrene-derived sesquiterpene lactones. Catalyzes three consecutive oxidations of germacrene A to produce germacrene A acid. Could also catalyze the three-step oxidation of non-natural substrate amorphadiene to artemisinic acid. The sequence is that of Germacrene A hydroxylase from Helianthus annuus (Common sunflower).